The primary structure comprises 458 residues: Bifunctional protein GlmU (458 aa).

Residues 1-229 (MNKFAIVLAA…FDESLGVNDR (229 aa)) are pyrophosphorylase. UDP-N-acetyl-alpha-D-glucosamine is bound by residues 8–11 (LAAG), lysine 22, glutamine 72, and 77–78 (GT). Aspartate 102 provides a ligand contact to Mg(2+). Residues glycine 139, glutamate 154, asparagine 169, and asparagine 227 each coordinate UDP-N-acetyl-alpha-D-glucosamine. Residue asparagine 227 coordinates Mg(2+). Residues 230-250 (VALSQAELTMRKRINHQHMVN) form a linker region. The segment at 251 to 458 (GVTLIDPATT…AKKMPHYRGQ (208 aa)) is N-acetyltransferase. Positions 332 and 350 each coordinate UDP-N-acetyl-alpha-D-glucosamine. Residue histidine 362 is the Proton acceptor of the active site. Positions 365 and 376 each coordinate UDP-N-acetyl-alpha-D-glucosamine. Acetyl-CoA-binding residues include alanine 379, serine 404, alanine 422, and arginine 439.

This sequence in the N-terminal section; belongs to the N-acetylglucosamine-1-phosphate uridyltransferase family. In the C-terminal section; belongs to the transferase hexapeptide repeat family. Homotrimer. Requires Mg(2+) as cofactor.

The protein localises to the cytoplasm. It carries out the reaction alpha-D-glucosamine 1-phosphate + acetyl-CoA = N-acetyl-alpha-D-glucosamine 1-phosphate + CoA + H(+). It catalyses the reaction N-acetyl-alpha-D-glucosamine 1-phosphate + UTP + H(+) = UDP-N-acetyl-alpha-D-glucosamine + diphosphate. Its pathway is nucleotide-sugar biosynthesis; UDP-N-acetyl-alpha-D-glucosamine biosynthesis; N-acetyl-alpha-D-glucosamine 1-phosphate from alpha-D-glucosamine 6-phosphate (route II): step 2/2. It participates in nucleotide-sugar biosynthesis; UDP-N-acetyl-alpha-D-glucosamine biosynthesis; UDP-N-acetyl-alpha-D-glucosamine from N-acetyl-alpha-D-glucosamine 1-phosphate: step 1/1. The protein operates within bacterial outer membrane biogenesis; LPS lipid A biosynthesis. Catalyzes the last two sequential reactions in the de novo biosynthetic pathway for UDP-N-acetylglucosamine (UDP-GlcNAc). The C-terminal domain catalyzes the transfer of acetyl group from acetyl coenzyme A to glucosamine-1-phosphate (GlcN-1-P) to produce N-acetylglucosamine-1-phosphate (GlcNAc-1-P), which is converted into UDP-GlcNAc by the transfer of uridine 5-monophosphate (from uridine 5-triphosphate), a reaction catalyzed by the N-terminal domain. This chain is Bifunctional protein GlmU, found in Lactococcus lactis subsp. lactis (strain IL1403) (Streptococcus lactis).